We begin with the raw amino-acid sequence, 321 residues long: Aspartate carbamoyltransferase catalytic subunit (321 aa).

Carbamoyl phosphate contacts are provided by Arg-57 and Thr-58. Position 85 (Lys-85) interacts with L-aspartate. Residues Arg-107, His-142, and Gln-145 each contribute to the carbamoyl phosphate site. Positions 175 and 229 each coordinate L-aspartate. Residues Gly-270 and Pro-271 each contribute to the carbamoyl phosphate site.

The protein belongs to the aspartate/ornithine carbamoyltransferase superfamily. ATCase family. In terms of assembly, heterododecamer (2C3:3R2) of six catalytic PyrB chains organized as two trimers (C3), and six regulatory PyrI chains organized as three dimers (R2).

It catalyses the reaction carbamoyl phosphate + L-aspartate = N-carbamoyl-L-aspartate + phosphate + H(+). Its pathway is pyrimidine metabolism; UMP biosynthesis via de novo pathway; (S)-dihydroorotate from bicarbonate: step 2/3. Its function is as follows. Catalyzes the condensation of carbamoyl phosphate and aspartate to form carbamoyl aspartate and inorganic phosphate, the committed step in the de novo pyrimidine nucleotide biosynthesis pathway. This chain is Aspartate carbamoyltransferase catalytic subunit, found in Mycobacterium leprae (strain TN).